The following is a 162-amino-acid chain: MPSFDTVLEPNLVEVRNAVDQSSKEIGTRFDFKGSSARVELKDKDITLYADSDFQLSQVMDILTLKLTKRSVDARFLDSSAKIEKIGGDKVKQVLKVKEGIDSETAKKIQQLIKASKMKVQAAIQGDAVRVTGAKRDDLQAAMALIRKDVADVPLSFNNFRD.

This sequence belongs to the YajQ family.

In terms of biological role, nucleotide-binding protein. In Methylibium petroleiphilum (strain ATCC BAA-1232 / LMG 22953 / PM1), this protein is Nucleotide-binding protein Mpe_A3039.